The sequence spans 131 residues: Peptide methionine sulfoxide reductase MsrB (131 aa).

A MsrB domain is found at 8-130 (LDEWRSMLDP…NSVCIDLRPR (123 aa)). The Zn(2+) site is built by C47, C50, C96, and C99. C119 serves as the catalytic Nucleophile.

This sequence belongs to the MsrB Met sulfoxide reductase family. Requires Zn(2+) as cofactor.

It catalyses the reaction L-methionyl-[protein] + [thioredoxin]-disulfide + H2O = L-methionyl-(R)-S-oxide-[protein] + [thioredoxin]-dithiol. The chain is Peptide methionine sulfoxide reductase MsrB from Pseudomonas putida (strain ATCC 700007 / DSM 6899 / JCM 31910 / BCRC 17059 / LMG 24140 / F1).